A 1071-amino-acid polypeptide reads, in one-letter code: ATP-dependent helicase/deoxyribonuclease subunit B (1071 aa).

The protein belongs to the helicase family. AddB/RexB type 2 subfamily. As to quaternary structure, heterodimer of AddA and RexB. Requires Mg(2+) as cofactor.

The heterodimer acts as both an ATP-dependent DNA helicase and an ATP-dependent, dual-direction single-stranded exonuclease. Recognizes the chi site generating a DNA molecule suitable for the initiation of homologous recombination. This subunit has 5' -&gt; 3' nuclease activity but not helicase activity. The sequence is that of ATP-dependent helicase/deoxyribonuclease subunit B from Streptococcus pyogenes serotype M6 (strain ATCC BAA-946 / MGAS10394).